A 386-amino-acid polypeptide reads, in one-letter code: Tubulin beta-1 chain (386 aa).

Residues Glu7, Ser76, Gly80, Thr81, Gly82, Asn142, and Asn164 each contribute to the GTP site. Residue Glu7 participates in Mg(2+) binding. The tract at residues Tyr363–Met386 is disordered. Residues Thr367 to Met386 are compositionally biased toward acidic residues.

The protein belongs to the tubulin family. As to quaternary structure, dimer of alpha and beta chains. A typical microtubule is a hollow water-filled tube with an outer diameter of 25 nm and an inner diameter of 15 nM. Alpha-beta heterodimers associate head-to-tail to form protofilaments running lengthwise along the microtubule wall with the beta-tubulin subunit facing the microtubule plus end conferring a structural polarity. Microtubules usually have 13 protofilaments but different protofilament numbers can be found in some organisms and specialized cells. Mg(2+) serves as cofactor.

The protein localises to the cytoplasm. It localises to the cytoskeleton. Tubulin is the major constituent of microtubules, a cylinder consisting of laterally associated linear protofilaments composed of alpha- and beta-tubulin heterodimers. Microtubules grow by the addition of GTP-tubulin dimers to the microtubule end, where a stabilizing cap forms. Below the cap, tubulin dimers are in GDP-bound state, owing to GTPase activity of alpha-tubulin. This Avena sativa (Oat) protein is Tubulin beta-1 chain (TUBB1).